The primary structure comprises 575 residues: Amyloid-beta A4 precursor protein-binding family A member 3 (575 aa).

M1 is subject to N-acetylmethionine. The span at 1 to 10 (MDFPTISRSP) shows a compositional bias: polar residues. Disordered stretches follow at residues 1–50 (MDFP…LSRM) and 118–211 (CEEC…GPCD). Position 11 is a phosphoserine (S11). The segment covering 143–153 (EDPDEDSDSPE) has biased composition (acidic residues). The segment covering 156-184 (EGASAEQEGSRSSSSSPEPWLETVPLVTP) has biased composition (low complexity). S171 is subject to Phosphoserine. Residues 215–364 (LLDGVIFGAR…QFLRESGIDP (150 aa)) form a required for interaction with NECAB3 region. In terms of domain architecture, PID spans 217–381 (DGVIFGARYL…SPGACHLHNG (165 aa)). S372 carries the phosphoserine modification. PDZ domains lie at 394–480 (EVHL…IVHC) and 485–560 (TAII…TMPA).

Binds to the cytoplasmic domain of amyloid protein (APP) in vivo. Interacts with HIF1AN (via N-terminus). Interacts with NECAB3; seems to mediate the interaction between NECAB3 and HIF1AN. Expressed in all tissues examined with lower levels in brain and testis.

It localises to the cytoplasm. Its subcellular location is the perinuclear region. Functionally, may modulate processing of the amyloid-beta precursor protein (APP) and hence formation of APP-beta. May enhance the activity of HIF1A in macrophages by inhibiting the activity of HIF1AN. This is Amyloid-beta A4 precursor protein-binding family A member 3 (APBA3) from Homo sapiens (Human).